Here is a 306-residue protein sequence, read N- to C-terminus: Aspartate carbamoyltransferase catalytic subunit (306 aa).

2 residues coordinate carbamoyl phosphate: R51 and T52. Residue K79 coordinates L-aspartate. Carbamoyl phosphate contacts are provided by R101, H129, and Q132. L-aspartate is bound by residues R162 and R213. A254 and P255 together coordinate carbamoyl phosphate.

Belongs to the aspartate/ornithine carbamoyltransferase superfamily. ATCase family. Heterododecamer (2C3:3R2) of six catalytic PyrB chains organized as two trimers (C3), and six regulatory PyrI chains organized as three dimers (R2).

It carries out the reaction carbamoyl phosphate + L-aspartate = N-carbamoyl-L-aspartate + phosphate + H(+). It participates in pyrimidine metabolism; UMP biosynthesis via de novo pathway; (S)-dihydroorotate from bicarbonate: step 2/3. In terms of biological role, catalyzes the condensation of carbamoyl phosphate and aspartate to form carbamoyl aspartate and inorganic phosphate, the committed step in the de novo pyrimidine nucleotide biosynthesis pathway. This chain is Aspartate carbamoyltransferase catalytic subunit, found in Bacillus thuringiensis (strain Al Hakam).